A 505-amino-acid polypeptide reads, in one-letter code: Protein FAM114A2 (505 aa).

Residues 1–65 (MSDKDDIETP…KPSSDLETSK (65 aa)) form a disordered region. A compositionally biased stretch (basic and acidic residues) spans 51 to 63 (KRPETKPSSDLET). Residues Ser87, Ser146, and Ser209 each carry the phosphoserine modification. Residues 268–295 (LNSLSGEELETLKVELEQLKETFSLAEF) adopt a coiled-coil conformation. Residues 342–366 (KSLTKPLAENEEGEKQSEAENTEQV) form a disordered region.

This sequence belongs to the FAM114 family.

The polypeptide is Protein FAM114A2 (FAM114A2) (Homo sapiens (Human)).